The sequence spans 280 residues: Undecaprenyl-diphosphatase (280 aa).

8 helical membrane passes run 1–21 (MTIL…FLPV), 41–61 (FVRA…LVLY), 87–107 (FDLY…GFLF), 115–135 (LGSV…MLFV), 147–167 (ITYP…FLPG), 186–206 (KAAA…ATLL), 225–245 (IVLL…IKFF), and 260–280 (YRIL…SLAV).

The protein belongs to the UppP family.

It is found in the cell inner membrane. It carries out the reaction di-trans,octa-cis-undecaprenyl diphosphate + H2O = di-trans,octa-cis-undecaprenyl phosphate + phosphate + H(+). Catalyzes the dephosphorylation of undecaprenyl diphosphate (UPP). Confers resistance to bacitracin. This Porphyromonas gingivalis (strain ATCC 33277 / DSM 20709 / CIP 103683 / JCM 12257 / NCTC 11834 / 2561) protein is Undecaprenyl-diphosphatase.